An 835-amino-acid polypeptide reads, in one-letter code: Cell division control protein 48 (835 aa).

Residues 1–21 (MGEEHKPLLDASGVDPREEDK) form a disordered region. 257-263 (PGTGKTL) is a binding site for ATP. Residues lysine 305, lysine 322, and lysine 346 each participate in a glycyl lysine isopeptide (Lys-Gly) (interchain with G-Cter in ubiquitin) cross-link. 2 residues coordinate ATP: asparagine 358 and histidine 394. Residues serine 472 and serine 519 each carry the phosphoserine modification. Lysine 522 is covalently cross-linked (Glycyl lysine isopeptide (Lys-Gly) (interchain with G-Cter in ubiquitin)). An ATP-binding site is contributed by 531 to 536 (GTGKTL). Glycyl lysine isopeptide (Lys-Gly) (interchain with G-Cter in ubiquitin) cross-links involve residues lysine 539, lysine 594, and lysine 673. A compositionally biased stretch (basic and acidic residues) spans 720-729 (EAEKEVKVEG). Residues 720 to 746 (EAEKEVKVEGEDVEMTDEGAKAEQEPE) form a disordered region. At threonine 735 the chain carries Phosphothreonine. Serine 770 is subject to Phosphoserine. The tract at residues 792-835 (SNFNFNDAPLGTTATDNANSNNSAPSGAGAAFGSNAEEDDDLYS) is disordered. The span at 802 to 826 (GTTATDNANSNNSAPSGAGAAFGSN) shows a compositional bias: low complexity.

The protein belongs to the AAA ATPase family. In terms of assembly, component of the heterotrimeric CDC48-NPL4-UFD1 ATPase complex. The CDC48-NPL4-UFD1 ATPase complex interacts with the HRD1 ubiquitin ligase complex composed of the E3 ligase HRD1, its cofactors HRD3, USA1 and DER1, substrate recruiting factor YOS9 and CDC48-binding protein UBX2. Interaction between the complexes is mediated by interaction between CDC48-NPL4-UFD1 complex member CDC48 and HRD1 complex member UBX2. Forms a complex composed of CDC48, NPL4, UFD1, UFD2 and SHP1. Forms a complex composed of CDC48, NPL4, UFD1, DOA1, SHP1 and deubiquitinase OTU1; within the complex interacts with DOA1/UFD3 and OTU1 to prevent multiubiquitination of substrates. Interacts with UFD2, to add further ubiquitin moieties; the interaction with UFD2 is prevented by DOA1/UFD3. Forms a complex composed of CDC48, DOA1, deubiquitinase UBP3 and probably BRE5; within the complex interacts with DOA1 and UBP3. Interacts (via C-terminus) with DOA1 (via PUL domain); the interaction is direct. Interacts with NPL4. Interacts with SHP1/UBX1, UBX2, UBX3, UBX4, UBX5, UBX6 and UBX7. Interacts with VMS1; the interaction recruits CDC48 to the mitochondria in response to mitochondrial stress. Component of the ribosome quality control complex (RQC), composed of the E3 ubiquitin ligase RKR1/LTN1, RQC1 and RQC2, as well as CDC48 and its ubiquitin-binding cofactors. RQC forms a stable complex with 60S ribosomal subunits. Interacts with ASE1 and CDC5; the interaction is likely to result in their degradation. Component of the DSCc E3 ligase complexes composed of at least TUL1, DSC2, DSC3, UBX3, CDC48 as well as VLD1 for the vacuole-localized complex or GLD1 for the Golgi/endosome-localized complex.

It localises to the microsome. It is found in the endoplasmic reticulum. Its subcellular location is the cytoplasm. It carries out the reaction ATP + H2O = ADP + phosphate + H(+). Its activity is regulated as follows. The first ATP-binding region has low ATPase activity. The second ATP-binding region is responsible for ATPase activity. ATP binding to the first ATP-binding region induces intrinsic activity of the second ATP-binding region. While ATP binding to the first ATP-binding region appears to prevent ATP hydrolysis by the second ATP-binding region, ADP-binding to first region promotes the coordinate and cooperative ATPase cycle of the second ATP-binding region. ATP binding to the first ATP-binding region induces a conformational change, promoting the rotation of the first ATP-binding region relative to the second ATP-binding region in the hexamer. Its function is as follows. ATP-dependent chaperone which probably uses the energy provided by ATP hydrolysis to generate mechanical force to unfold substrate proteins, disassemble protein complexes, and disaggregate protein aggregates. By recruiting and promoting the degradation of ubiquitinated proteins, plays a role in the ubiquitin fusion degradation (UFD) pathway. Has a role in the endoplasmic reticulum-associated degradation (ERAD) pathway which mediates the cytoplasmic elimination of misfolded proteins exported from the ER. Required for the proteasome-dependent processing/activation of MGA2 and SPT23 transcription factors leading to the subsequent expression of OLE1. Has an additional role in the turnover of OLE1 where it targets ubiquitinated OLE1 and other proteins to the ERAD. Regulates ubiquitin-mediated mitochondria protein degradation. Involved in spindle disassembly probably by promoting the degradation of spindle assembly factors ASE1 and CDC5 at the end of mitosis. Component of the ribosome quality control complex (RQC), a ribosome-associated complex that mediates ubiquitination and extraction of incompletely synthesized nascent chains for proteasomal degradation. CDC48 may provide the mechanical force that dislodges the polyubiquitinated nascent peptides from the exit channel. Required for ribophagy, a process which relocalizes ribosomal particles into the vacuole for degradation in response to starvation. Component of the DSC E3 ubiquitin ligase complexes that tag proteins present in Golgi, endosome and vacuole membranes and function in protein homeostasis under non-stress conditions and support a role in protein quality control. Substrate initially binds through the attached polyubiquitin chain to UDF1/NPL4 and then moves through the pore of the ATPase rings and is thereby unfolded. Acts on a broad range of even well-folded proteins via ubiquitin-binding and unfolding to initiate substrate processing. Involved in degradation of mislocalized tail-anchored transmembrane proteins extracted from the mitochondrion outer membrane by MSP1 and ubiquitinated by DOA10. This chain is Cell division control protein 48, found in Saccharomyces cerevisiae (strain ATCC 204508 / S288c) (Baker's yeast).